Here is a 206-residue protein sequence, read N- to C-terminus: Inner membrane-spanning protein YciB (206 aa).

5 consecutive transmembrane segments (helical) span residues 22–42, 50–70, 76–96, 118–138, and 148–168; these read IYTA…LTYF, MQVI…FLHD, WKVT…HIMG, INWA…YVAF, and FKVF…GVYI. Basic and acidic residues predominate over residues 178 to 189; the sequence is LPKDKHQQRDQE. The tract at residues 178-206 is disordered; sequence LPKDKHQQRDQETQNDTQQELSGKNTEEK. The segment covering 191 to 206 has biased composition (polar residues); it reads QNDTQQELSGKNTEEK.

The protein belongs to the YciB family.

The protein resides in the cell inner membrane. Its function is as follows. Plays a role in cell envelope biogenesis, maintenance of cell envelope integrity and membrane homeostasis. This chain is Inner membrane-spanning protein YciB, found in Vibrio atlanticus (strain LGP32) (Vibrio splendidus (strain Mel32)).